The chain runs to 199 residues: Probable GTP-binding protein EngB (199 aa).

The region spanning 25–199 is the EngB-type G domain; it reads IGMEVAFVGY…LKRVLNNWLR (175 aa). Mg(2+)-binding residues include serine 40 and threonine 62.

Belongs to the TRAFAC class TrmE-Era-EngA-EngB-Septin-like GTPase superfamily. EngB GTPase family. Requires Mg(2+) as cofactor.

Necessary for normal cell division and for the maintenance of normal septation. This is Probable GTP-binding protein EngB from Blochmanniella pennsylvanica (strain BPEN).